The sequence spans 685 residues: Protein SPT2 homolog (685 aa).

The tract at residues 1 to 570 (MDFREILMIA…PPLSGYRAAQ (570 aa)) is important for interaction with DNA. Lysine 37 is covalently cross-linked (Glycyl lysine isopeptide (Lys-Gly) (interchain with G-Cter in SUMO2)). A coiled-coil region spans residues 45–81 (QAFLKRKEEELRRKALEEKRRKEELVKKRIELKHDKK). The tract at residues 79 to 168 (DKKARAMAKR…PLKSAPPPMN (90 aa)) is disordered. A compositionally biased stretch (basic and acidic residues) spans 101–111 (IEEKSKKRQAT). The stretch at 123-148 (YEMEEENEFLEYNHAESEQEYEEEQE) forms a coiled coil. Lysine 187 is covalently cross-linked (Glycyl lysine isopeptide (Lys-Gly) (interchain with G-Cter in SUMO2)). Basic and acidic residues-rich tracts occupy residues 188-209 (VVKK…EFLE) and 260-275 (HAEK…EKHL). Disordered stretches follow at residues 188 to 615 (VVKK…QEEI) and 644 to 685 (SWKE…LKRR). Position 278 is a phosphoserine (serine 278). Composition is skewed to low complexity over residues 317 to 330 (SSTS…TSAS), 365 to 385 (SPGV…PSTG), and 402 to 415 (GSSS…ISGS). Positions 416–431 (KKPTNDSNPSRRTVSG) are enriched in polar residues. A compositionally biased stretch (low complexity) spans 435-501 (PGQPASSSGG…PGRSISGSIP (67 aa)). Residue serine 471 is modified to Phosphoserine. Over residues 519–529 (GPGQTVSSSGP) the composition is skewed to polar residues. The span at 542–553 (ISSKNIISRSSN) shows a compositional bias: low complexity. Residues 571-685 (GPQRLPFPTG…RRRAKKLKRR (115 aa)) are important for interaction with histones. Lysine 582 carries the post-translational modification N6-acetyllysine. Positions 587–613 (YEEEDDDDDEYDSEMEDFIEDEGEPQE) are enriched in acidic residues. Serine 599 carries the phosphoserine modification. Composition is skewed to basic and acidic residues over residues 644–655 (SWKEQQKEEAKS) and 666–676 (EMRREEEEMQR). Positions 645-685 (WKEQQKEEAKSLRLGMQEDLEEMRREEEEMQRRRAKKLKRR) form a coiled coil.

The protein belongs to the SPT2 family. Interacts with histones. Interacts with a heterotetrameric complex formed by histone H3 and H4, especially when the histone tetramer is not bound to DNA. Interacts with histone H3.3.

It is found in the nucleus. Its subcellular location is the nucleolus. Its function is as follows. Histone chaperone that stabilizes pre-existing histone tetramers and regulates replication-independent histone exchange on chromatin. Required for normal chromatin refolding in the coding region of transcribed genes, and for the suppression of spurious transcription. Binds DNA and histones and promotes nucleosome assembly (in vitro). Facilitates formation of tetrameric histone complexes containing histone H3 and H4. Modulates RNA polymerase 1-mediated transcription. Binds DNA, with a preference for branched DNA species, such as Y-form DNA and Holliday junction DNA. The sequence is that of Protein SPT2 homolog (SPTY2D1) from Homo sapiens (Human).